The primary structure comprises 203 residues: Gramillins biosynthetic cluster protein FGSG_00038 (203 aa).

It functions in the pathway mycotoxin biosynthesis. In terms of biological role, part of the gene cluster that mediates the biosynthesis of gramillins A and B, bicyclic lipopeptides that induce cell death in maize leaves but not in wheat leaves. The nonribosomal peptide synthetase GRA1 incorporates respectively a glutamic adic (Glu), a leucine (Leu), a serine (Ser), a hydroxyglutamine (HOGln), a 2-amino decanoic acid, and 2 cysteins (CysB and CysA). The biosynthesis of 2-amino decanoic acid incorporated in gramillins could be initiated by a fatty acid synthase composed of the alpha and beta subunits FGSG_00036 and FGSG_11656. The cytochrome P450 monooxygenase FGSG_15680 could hydroxylate the fatty acid chain. Subsequent oxidation to the ketone by the oxidoreductase FGSG_00048 and transamination by aminotransferase FGSG_00049 could form 2-amino-decanoic acid. On the other hand, FGSG_15680 could also be responsible for the HO-modified glutamine at the gamma-position. Whether hydroxylation occurs on the fully assembled product or on the Gln residue prior to assembly into the gramillins requires further proof. The thioredoxin FGSG_00043 could also be required for the disulfide-bond formation between CysA and CysB. The specific involvement of the remaining proteins from the cluster is more difficult to discern, but could have broader regulatory (FGSG_00040 and FGSG_11657) or enzymatic functions (FGSG_00044 and FGSG_00045). The final C-domain of GRA1 does not possess the expected sequence of a termination CT domain, often implicated in macrocyclization and release of a cyclopeptidein fungal NRPs; and the thioesterase FGSG_00047 may act in concert with the terminal C-domain of GRA1 to catalyze the formation of the macrocyclic anhydride and release of the products. The polypeptide is Gramillins biosynthetic cluster protein FGSG_00038 (Gibberella zeae (strain ATCC MYA-4620 / CBS 123657 / FGSC 9075 / NRRL 31084 / PH-1) (Wheat head blight fungus)).